Consider the following 322-residue polypeptide: Acetyl-coenzyme A carboxylase carboxyl transferase subunit alpha (322 aa).

Positions 43 to 297 (ALKSKSNALT…KEVLTQQLNK (255 aa)) constitute a CoA carboxyltransferase C-terminal domain.

The protein belongs to the AccA family. Acetyl-CoA carboxylase is a heterohexamer composed of biotin carboxyl carrier protein (AccB), biotin carboxylase (AccC) and two subunits each of ACCase subunit alpha (AccA) and ACCase subunit beta (AccD).

It is found in the cytoplasm. The catalysed reaction is N(6)-carboxybiotinyl-L-lysyl-[protein] + acetyl-CoA = N(6)-biotinyl-L-lysyl-[protein] + malonyl-CoA. The protein operates within lipid metabolism; malonyl-CoA biosynthesis; malonyl-CoA from acetyl-CoA: step 1/1. In terms of biological role, component of the acetyl coenzyme A carboxylase (ACC) complex. First, biotin carboxylase catalyzes the carboxylation of biotin on its carrier protein (BCCP) and then the CO(2) group is transferred by the carboxyltransferase to acetyl-CoA to form malonyl-CoA. This Vesicomyosocius okutanii subsp. Calyptogena okutanii (strain HA) protein is Acetyl-coenzyme A carboxylase carboxyl transferase subunit alpha.